The chain runs to 102 residues: Phosphoribosyl-ATP pyrophosphatase (102 aa).

It belongs to the PRA-PH family.

The protein localises to the cytoplasm. The enzyme catalyses 1-(5-phospho-beta-D-ribosyl)-ATP + H2O = 1-(5-phospho-beta-D-ribosyl)-5'-AMP + diphosphate + H(+). The protein operates within amino-acid biosynthesis; L-histidine biosynthesis; L-histidine from 5-phospho-alpha-D-ribose 1-diphosphate: step 2/9. The chain is Phosphoribosyl-ATP pyrophosphatase from Dinoroseobacter shibae (strain DSM 16493 / NCIMB 14021 / DFL 12).